The following is a 94-amino-acid chain: Integration host factor subunit beta (94 aa).

Belongs to the bacterial histone-like protein family. Heterodimer of an alpha and a beta chain.

Its function is as follows. This protein is one of the two subunits of integration host factor, a specific DNA-binding protein that functions in genetic recombination as well as in transcriptional and translational control. This chain is Integration host factor subunit beta, found in Aeromonas hydrophila subsp. hydrophila (strain ATCC 7966 / DSM 30187 / BCRC 13018 / CCUG 14551 / JCM 1027 / KCTC 2358 / NCIMB 9240 / NCTC 8049).